We begin with the raw amino-acid sequence, 187 residues long: Elongation factor P (187 aa).

This sequence belongs to the elongation factor P family.

The protein localises to the cytoplasm. It functions in the pathway protein biosynthesis; polypeptide chain elongation. In terms of biological role, involved in peptide bond synthesis. Stimulates efficient translation and peptide-bond synthesis on native or reconstituted 70S ribosomes in vitro. Probably functions indirectly by altering the affinity of the ribosome for aminoacyl-tRNA, thus increasing their reactivity as acceptors for peptidyl transferase. The sequence is that of Elongation factor P (efp) from Synechocystis sp. (strain ATCC 27184 / PCC 6803 / Kazusa).